A 67-amino-acid chain; its full sequence is Large ribosomal subunit protein bL35 (67 aa).

It belongs to the bacterial ribosomal protein bL35 family.

The protein is Large ribosomal subunit protein bL35 of Caldanaerobacter subterraneus subsp. tengcongensis (strain DSM 15242 / JCM 11007 / NBRC 100824 / MB4) (Thermoanaerobacter tengcongensis).